Consider the following 210-residue polypeptide: Ribosomal RNA small subunit methyltransferase G (210 aa).

S-adenosyl-L-methionine-binding positions include Gly76, Met81, 127 to 128, and Arg145; that span reads VE.

This sequence belongs to the methyltransferase superfamily. RNA methyltransferase RsmG family.

It is found in the cytoplasm. The catalysed reaction is guanosine(527) in 16S rRNA + S-adenosyl-L-methionine = N(7)-methylguanosine(527) in 16S rRNA + S-adenosyl-L-homocysteine. Functionally, specifically methylates the N7 position of guanine in position 527 of 16S rRNA. This Acinetobacter baumannii (strain AB307-0294) protein is Ribosomal RNA small subunit methyltransferase G.